Consider the following 166-residue polypeptide: Myosin regulatory light chain 2, ventricular/cardiac muscle isoform (166 aa).

The residue at position 2 (alanine 2) is a N,N,N-trimethylalanine. 2 positions are modified to phosphoserine; by MLCK: serine 14 and serine 15. A Phosphoserine modification is found at serine 19. 3 EF-hand domains span residues threonine 24–valine 59, aspartate 94–arginine 129, and phenylalanine 130–lysine 165. Ca(2+) contacts are provided by aspartate 37, asparagine 39, aspartate 41, and aspartate 48. Threonine 52 is subject to Phosphothreonine.

As to quaternary structure, myosin is a hexamer of 2 heavy chains and 4 light chains. Interacts with MYOC. In terms of processing, N-terminus is methylated by METTL11A/NTM1. Phosphorylated by MYLK3 and MYLK2; promotes cardiac muscle contraction and function. Dephosphorylated by PPP1CB complexed to PPP1R12B. The phosphorylated form in adult is expressed as gradients across the heart from endocardium (low phosphorylation) to epicardium (high phosphorylation); regulates cardiac torsion and workload distribution. Abundantly expressed in both cardiac and slow skeletal muscle. In the adult heart, the phosphorylated form is highly expressed in epicardium and weakly in endocardium.

It is found in the cytoplasm. The protein resides in the myofibril. The protein localises to the sarcomere. It localises to the a band. Contractile protein that plays a role in heart development and function. Following phosphorylation, plays a role in cross-bridge cycling kinetics and cardiac muscle contraction by increasing myosin lever arm stiffness and promoting myosin head diffusion; as a consequence of the increase in maximum contraction force and calcium sensitivity of contraction force. These events altogether slow down myosin kinetics and prolong duty cycle resulting in accumulated myosins being cooperatively recruited to actin binding sites to sustain thin filament activation as a means to fine-tune myofilament calcium sensitivity to force. During cardiogenesis plays an early role in cardiac contractility by promoting cardiac myofibril assembly. The chain is Myosin regulatory light chain 2, ventricular/cardiac muscle isoform from Mus musculus (Mouse).